The following is a 275-amino-acid chain: tRNA pseudouridine synthase A (275 aa).

The active-site Nucleophile is aspartate 62. A substrate-binding site is contributed by tyrosine 124.

This sequence belongs to the tRNA pseudouridine synthase TruA family. As to quaternary structure, homodimer.

The enzyme catalyses uridine(38/39/40) in tRNA = pseudouridine(38/39/40) in tRNA. In terms of biological role, formation of pseudouridine at positions 38, 39 and 40 in the anticodon stem and loop of transfer RNAs. The protein is tRNA pseudouridine synthase A of Herminiimonas arsenicoxydans.